The primary structure comprises 481 residues: MKFHIGKDGEVKIILVYKNAEKVEEANDLYSYLKEKELFKGDLGEVYSHISHSEDKFILLGIGEKEKTTANSLRKAFFNAGKELMKFKVTSIKISIPMFKNLKYESIVQSITEGLLQSEYSFEKYLTKKKISPSIKNVYLDILEEKKEETINTINESKNLIEGIFLARNLVNEPAIYMTPTVLANNAKNQLESLGVEVKIYGKEKIKELGMEAFLAVSKGSFEESQLIVMNYKGNSNSDKKLALVGKGLTYDSGGYSIKPTSSMINMHSDMAGSASVIGAMKAIAMSKLEVNVVAIVAACENMISGGAYKPGDIISSMSGKTIEILNTDAEGRLTLADALWYAVDVVKADKIIDIATLTGACVTALGSINTGAITNNSYLMDNVKKASECAGEPVWEFPNNDEYKELIKGTFGDLKNSSGREAGAITAGMFLQEFVGNTPWVHLDVAGTAYLSSKNGYLQKGATGVPVKTLYYLAKGFKNK.

Positions 247 and 252 each coordinate Mn(2+). K259 is a catalytic residue. Mn(2+)-binding residues include D270, D329, and E331. R333 is a catalytic residue.

This sequence belongs to the peptidase M17 family. The cofactor is Mn(2+).

The protein localises to the cytoplasm. It carries out the reaction Release of an N-terminal amino acid, Xaa-|-Yaa-, in which Xaa is preferably Leu, but may be other amino acids including Pro although not Arg or Lys, and Yaa may be Pro. Amino acid amides and methyl esters are also readily hydrolyzed, but rates on arylamides are exceedingly low.. It catalyses the reaction Release of an N-terminal amino acid, preferentially leucine, but not glutamic or aspartic acids.. Its function is as follows. Presumably involved in the processing and regular turnover of intracellular proteins. Catalyzes the removal of unsubstituted N-terminal amino acids from various peptides. This chain is Probable cytosol aminopeptidase, found in Clostridium tetani (strain Massachusetts / E88).